Reading from the N-terminus, the 118-residue chain is Large ribosomal subunit protein uL18 (118 aa).

This sequence belongs to the universal ribosomal protein uL18 family. As to quaternary structure, part of the 50S ribosomal subunit; part of the 5S rRNA/L5/L18/L25 subcomplex. Contacts the 5S and 23S rRNAs.

This is one of the proteins that bind and probably mediate the attachment of the 5S RNA into the large ribosomal subunit, where it forms part of the central protuberance. This Parvibaculum lavamentivorans (strain DS-1 / DSM 13023 / NCIMB 13966) protein is Large ribosomal subunit protein uL18.